The sequence spans 361 residues: Putative agmatine deiminase (361 aa).

The Amidino-cysteine intermediate role is filled by Cys354.

It belongs to the agmatine deiminase family.

The catalysed reaction is agmatine + H2O = N-carbamoylputrescine + NH4(+). This chain is Putative agmatine deiminase, found in Streptococcus pneumoniae (strain Hungary19A-6).